Here is a 117-residue protein sequence, read N- to C-terminus: Large ribosomal subunit protein bL19 (117 aa).

It belongs to the bacterial ribosomal protein bL19 family.

In terms of biological role, this protein is located at the 30S-50S ribosomal subunit interface and may play a role in the structure and function of the aminoacyl-tRNA binding site. The polypeptide is Large ribosomal subunit protein bL19 (Alkaliphilus metalliredigens (strain QYMF)).